We begin with the raw amino-acid sequence, 90 residues long: Envelope protein US9 (90 aa).

Residues 1-67 are Intravirion-facing; the sequence is MTSRLSDPNS…RRRRTRCVGM (67 aa). Positions 21 to 24 match the Internalization motif motif; sequence YPTA. The segment at 30 to 39 is acidic; that stretch reads EAYYSESEDE. Phosphoserine; by host CK2 is present on residues serine 34 and serine 36. The chain crosses the membrane as a helical; Signal-anchor for type II membrane protein span at residues 68–88; the sequence is VIACLLVAVLSGGFGALLMWL. Residues 89-90 are Virion surface-facing; the sequence is LR.

Belongs to the alphaherpesvirinae envelope protein US9 family. Phosphorylated on serines within the acidic cluster, possibly by host CK2. Phosphorylation determines whether endocytosed viral US9 traffics to the trans-Golgi network or recycles to the cell membrane.

The protein localises to the virion membrane. It is found in the host Golgi apparatus membrane. The protein resides in the host smooth endoplasmic reticulum membrane. Its subcellular location is the host cell membrane. Functionally, essential for the anterograde spread of the infection throughout the host nervous system. Together with the gE/gI heterodimer, US9 is involved in the sorting and transport of viral structural components toward axon tips. This is Envelope protein US9 from Homo sapiens (Human).